The sequence spans 225 residues: Uracil-DNA glycosylase (225 aa).

The active-site Proton acceptor is the Asp-65.

The protein belongs to the uracil-DNA glycosylase (UDG) superfamily. UNG family.

It localises to the cytoplasm. The catalysed reaction is Hydrolyzes single-stranded DNA or mismatched double-stranded DNA and polynucleotides, releasing free uracil.. Excises uracil residues from the DNA which can arise as a result of misincorporation of dUMP residues by DNA polymerase or due to deamination of cytosine. The protein is Uracil-DNA glycosylase of Bacillus cereus (strain ZK / E33L).